The primary structure comprises 45 residues: uncharacterized protein (45 aa).

The chain crosses the membrane as a helical span at residues 15-37; the sequence is EVVGTLMAVLITFALVAVVFNFI.

It localises to the membrane. This is an uncharacterized protein from Archaeoglobus fulgidus (strain ATCC 49558 / DSM 4304 / JCM 9628 / NBRC 100126 / VC-16).